The primary structure comprises 184 residues: Female-specific protein transformer (184 aa).

Composition is skewed to basic and acidic residues over residues 1 to 39 (MKMDADSSGTEHRDSRGSRSRSWREREHHGRTSERDSRK) and 49 to 58 (DEVREQDRIR). Disordered regions lie at residues 1 to 123 (MKMD…PKII) and 146 to 184 (YQRLPRPPPFPPAPFRYRQRQPFMGAPRFGYRNAGRPPY). 2 stretches are compositionally biased toward basic residues: residues 59 to 75 (SLRQRAHQSTRRTRSRS) and 84 to 114 (SRHRRHRQRSRSRNRSRSRSSERRRRQRSPH). Residues 150 to 159 (PRPPPFPPAP) show a composition bias toward pro residues.

It is found in the nucleus speckle. In terms of biological role, member of the regulatory pathway controlling female somatic sexual differentiation, regulated by Sxl. Activates dsx female-specific splicing by promoting the formation of a splicing enhancer complex which consists of tra, tra2 and sr proteins. This chain is Female-specific protein transformer (tra), found in Drosophila simulans (Fruit fly).